Reading from the N-terminus, the 102-residue chain is Membrane-bound protein LytA (102 aa).

The signal sequence occupies residues 1–16 (MKKFIALLFFILLLSG). A lipid anchor (N-palmitoyl cysteine) is attached at C17. Residue C17 is the site of S-diacylglycerol cysteine attachment.

The protein localises to the cell membrane. In terms of biological role, possible role in the secretion of LytB and LytC. This chain is Membrane-bound protein LytA (lytA), found in Bacillus subtilis (strain 168).